The sequence spans 958 residues: UvrABC system protein A (958 aa).

Positions 1–232 (MQSKSIKIQG…IETALKLGEG (232 aa)) constitute an ABC transporter 1 domain. 33-40 (GLSGSGKS) is an ATP binding site. The segment at 252 to 279 (CPICGFSIGELEPRLFSFNSPFGACPSC) adopts a C4-type zinc-finger fold. 2 ABC transporter domains span residues 315–593 (QYYP…KYLS) and 604–935 (RRKP…GKYL). 639–646 (GVSGSGKS) lines the ATP pocket. The C4-type zinc finger occupies 738-764 (CEACRGDGILKIEMHFLPDVYVPCEVC).

This sequence belongs to the ABC transporter superfamily. UvrA family. Forms a heterotetramer with UvrB during the search for lesions.

The protein localises to the cytoplasm. The UvrABC repair system catalyzes the recognition and processing of DNA lesions. UvrA is an ATPase and a DNA-binding protein. A damage recognition complex composed of 2 UvrA and 2 UvrB subunits scans DNA for abnormalities. When the presence of a lesion has been verified by UvrB, the UvrA molecules dissociate. This is UvrABC system protein A from Oceanobacillus iheyensis (strain DSM 14371 / CIP 107618 / JCM 11309 / KCTC 3954 / HTE831).